We begin with the raw amino-acid sequence, 246 residues long: Probable transcriptional regulatory protein YebC (246 aa).

Residues 1–20 are disordered; it reads MAGHSKWANTRHRKAAQDAK.

This sequence belongs to the TACO1 family.

Its subcellular location is the cytoplasm. The polypeptide is Probable transcriptional regulatory protein YebC (Shigella dysenteriae serotype 1 (strain Sd197)).